The sequence spans 403 residues: Tyrosine--tRNA ligase (403 aa).

The short motif at 42–51 (PTAPDLHLGH) is the 'HIGH' region element. The 'KMSKS' region signature appears at 226–230 (KMSKS). Lys-229 contacts ATP. Residues 339 to 400 (LRIASLLTAA…GKRNFARVSL (62 aa)) form the S4 RNA-binding domain.

It belongs to the class-I aminoacyl-tRNA synthetase family. TyrS type 2 subfamily. As to quaternary structure, homodimer.

The protein localises to the cytoplasm. The enzyme catalyses tRNA(Tyr) + L-tyrosine + ATP = L-tyrosyl-tRNA(Tyr) + AMP + diphosphate + H(+). Functionally, catalyzes the attachment of tyrosine to tRNA(Tyr) in a two-step reaction: tyrosine is first activated by ATP to form Tyr-AMP and then transferred to the acceptor end of tRNA(Tyr). This Xanthomonas oryzae pv. oryzae (strain MAFF 311018) protein is Tyrosine--tRNA ligase.